The following is a 362-amino-acid chain: Biotin synthase (362 aa).

Residues 46-273 (NEVQVSTLLS…ASHVRLSAGR (228 aa)) form the Radical SAM core domain. [4Fe-4S] cluster contacts are provided by Cys-61, Cys-65, and Cys-68. [2Fe-2S] cluster contacts are provided by Cys-105, Cys-136, Cys-196, and Arg-268.

Belongs to the radical SAM superfamily. Biotin synthase family. In terms of assembly, homodimer. [4Fe-4S] cluster is required as a cofactor. Requires [2Fe-2S] cluster as cofactor.

The catalysed reaction is (4R,5S)-dethiobiotin + (sulfur carrier)-SH + 2 reduced [2Fe-2S]-[ferredoxin] + 2 S-adenosyl-L-methionine = (sulfur carrier)-H + biotin + 2 5'-deoxyadenosine + 2 L-methionine + 2 oxidized [2Fe-2S]-[ferredoxin]. The protein operates within cofactor biosynthesis; biotin biosynthesis; biotin from 7,8-diaminononanoate: step 2/2. Its function is as follows. Catalyzes the conversion of dethiobiotin (DTB) to biotin by the insertion of a sulfur atom into dethiobiotin via a radical-based mechanism. This Aeromonas salmonicida (strain A449) protein is Biotin synthase.